The chain runs to 139 residues: Putative pre-16S rRNA nuclease (139 aa).

Belongs to the YqgF nuclease family.

It is found in the cytoplasm. Could be a nuclease involved in processing of the 5'-end of pre-16S rRNA. The chain is Putative pre-16S rRNA nuclease from Haemophilus influenzae (strain 86-028NP).